The primary structure comprises 160 residues: Transcriptional regulator MraZ (160 aa).

SpoVT-AbrB domains follow at residues 5–50 (NFET…DGGY) and 93–136 (AVEC…SQAE).

This sequence belongs to the MraZ family. As to quaternary structure, forms oligomers.

It is found in the cytoplasm. The protein resides in the nucleoid. The polypeptide is Transcriptional regulator MraZ (Geotalea daltonii (strain DSM 22248 / JCM 15807 / FRC-32) (Geobacter daltonii)).